A 164-amino-acid chain; its full sequence is uncharacterized protein (164 aa).

The first 18 residues, 1–18 (MILILTIIVGFLIYFVTA), serve as a signal peptide directing secretion. Asn-88 carries an N-linked (GlcNAc...) asparagine; by host glycan.

It belongs to the IIV-6 357R family.

This is an uncharacterized protein from Acheta domesticus (House cricket).